A 267-amino-acid polypeptide reads, in one-letter code: Hydroxyethylthiazole kinase 2 (267 aa).

Methionine 41 serves as a coordination point for substrate. 2 residues coordinate ATP: lysine 116 and threonine 166. Residue glycine 193 participates in substrate binding.

It belongs to the Thz kinase family. It depends on Mg(2+) as a cofactor.

The catalysed reaction is 5-(2-hydroxyethyl)-4-methylthiazole + ATP = 4-methyl-5-(2-phosphooxyethyl)-thiazole + ADP + H(+). It participates in cofactor biosynthesis; thiamine diphosphate biosynthesis; 4-methyl-5-(2-phosphoethyl)-thiazole from 5-(2-hydroxyethyl)-4-methylthiazole: step 1/1. In terms of biological role, catalyzes the phosphorylation of the hydroxyl group of 4-methyl-5-beta-hydroxyethylthiazole (THZ). In Streptococcus pneumoniae (strain Hungary19A-6), this protein is Hydroxyethylthiazole kinase 2.